The primary structure comprises 458 residues: D-inositol 3-phosphate glycosyltransferase (458 aa).

H16 is a 1D-myo-inositol 3-phosphate binding site. UDP-N-acetyl-alpha-D-glucosamine is bound by residues 22-23 (QP) and G30. 1D-myo-inositol 3-phosphate contacts are provided by residues 27-32 (DAGGMN), K85, Y118, T142, and R162. UDP-N-acetyl-alpha-D-glucosamine is bound by residues R236, K241, and Q302. 3 residues coordinate Mg(2+): Y311, R312, and S314. Residues E324 and E332 each coordinate UDP-N-acetyl-alpha-D-glucosamine. A Mg(2+)-binding site is contributed by T338. The interval 428–458 (VAAQNVTGSSSRTRRPWRRRRSTLLPMTGRS) is disordered. A compositionally biased stretch (basic residues) spans 439-449 (RTRRPWRRRRS).

The protein belongs to the glycosyltransferase group 1 family. MshA subfamily. In terms of assembly, homodimer.

The enzyme catalyses 1D-myo-inositol 3-phosphate + UDP-N-acetyl-alpha-D-glucosamine = 1D-myo-inositol 2-acetamido-2-deoxy-alpha-D-glucopyranoside 3-phosphate + UDP + H(+). Functionally, catalyzes the transfer of a N-acetyl-glucosamine moiety to 1D-myo-inositol 3-phosphate to produce 1D-myo-inositol 2-acetamido-2-deoxy-glucopyranoside 3-phosphate in the mycothiol biosynthesis pathway. The protein is D-inositol 3-phosphate glycosyltransferase of Gordonia bronchialis (strain ATCC 25592 / DSM 43247 / BCRC 13721 / JCM 3198 / KCTC 3076 / NBRC 16047 / NCTC 10667) (Rhodococcus bronchialis).